The primary structure comprises 703 residues: Leucine zipper putative tumor suppressor 3 (703 aa).

Disordered regions lie at residues 1-22, 40-190, and 204-347; these read MAPA…PHLF, RADP…SEPL, and FHSM…PPSP. Residues 96–107 show a composition bias toward low complexity; that stretch reads GSFPGPRSSGSG. Positions 109-124 are enriched in basic and acidic residues; the sequence is NRERPGPGRYPSEDKV. The segment covering 205 to 218 has biased composition (polar residues); that stretch reads HSMQNLCPPQTNGT. A compositionally biased stretch (low complexity) spans 251-268; that stretch reads DSGRNSLTSLPTYSSSYS. A compositionally biased stretch (gly residues) spans 290-299; the sequence is SSGGGGGGSG. A compositionally biased stretch (low complexity) spans 304–324; sequence GTSDSGRASSKSGSSSSMGRS. Gly residues predominate over residues 325-336; it reads GHLGSGEGGNGG. 2 positions are modified to phosphoserine: S346 and S348. Coiled-coil stretches lie at residues 348–526 and 600–669; these read SALI…SLRD and TRAL…RLRE. Positions 665 to 703 are disordered; it reads RRLRERGAAGGSRTPTPQHGEEEKAWTPSRLERIESTEI. The segment covering 683 to 703 has biased composition (basic and acidic residues); it reads HGEEEKAWTPSRLERIESTEI.

Belongs to the LZTS3 family. As to quaternary structure, interacts (via C-terminus) with SHANK3 (via PDZ domain). Interacts (via coiled coil) with SIPA1L1. Can form homooligomers. Detected in brain, with highest expression in brain cortex, caudate putamen, cerebellum and hippocampus. Detected in neuropil (at protein level). Detected in brain and kidney.

The protein localises to the synapse. It localises to the postsynaptic density. Its subcellular location is the cell projection. It is found in the dendritic spine. The protein resides in the dendrite. The protein localises to the cytoplasm. It localises to the cytoskeleton. Its function is as follows. May be involved in promoting the maturation of dendritic spines, probably via regulating SIPA1L1 levels at the postsynaptic density of synapses. The protein is Leucine zipper putative tumor suppressor 3 of Rattus norvegicus (Rat).